The following is an 85-amino-acid chain: MLVNIGFGNIVSLSRIIAVVNPGSSPMKRMKDEARKRGKLIDATEGRKTRSIIITDSDHIILSALQVETILQRINEINRVEDGDL.

Belongs to the RemA family.

This chain is Putative regulatory protein THEYE_A0405, found in Thermodesulfovibrio yellowstonii (strain ATCC 51303 / DSM 11347 / YP87).